Consider the following 319-residue polypeptide: NADH-ubiquinone oxidoreductase chain 1 (319 aa).

Transmembrane regions (helical) follow at residues 3–23 (LITLIINPLMYIIPILLAMAF), 74–94 (LFLLTPTLALTLALILWIPLP), 106–126 (ILFILAVSSLSVYSILGSGWA), 149–169 (TLGLIIISLIMFTGGFTLTTF), 175–195 (AVWLILPAWPLAAMWFISTLA), 226–246 (LFFLAEYTNILLMNALSTILF), 254–274 (LTINLNWAIKTMILASMFLWV), and 294–314 (FLPLTLALITWHISLPISMAG).

This sequence belongs to the complex I subunit 1 family.

The protein resides in the mitochondrion inner membrane. It catalyses the reaction a ubiquinone + NADH + 5 H(+)(in) = a ubiquinol + NAD(+) + 4 H(+)(out). Its function is as follows. Core subunit of the mitochondrial membrane respiratory chain NADH dehydrogenase (Complex I) that is believed to belong to the minimal assembly required for catalysis. Complex I functions in the transfer of electrons from NADH to the respiratory chain. The immediate electron acceptor for the enzyme is believed to be ubiquinone. This is NADH-ubiquinone oxidoreductase chain 1 (MT-ND1) from Polypterus ornatipinnis (Ornate bichir).